Consider the following 147-residue polypeptide: Anti-sigma F factor (147 aa).

This sequence belongs to the anti-sigma-factor family.

The catalysed reaction is L-seryl-[protein] + ATP = O-phospho-L-seryl-[protein] + ADP + H(+). It catalyses the reaction L-threonyl-[protein] + ATP = O-phospho-L-threonyl-[protein] + ADP + H(+). Functionally, binds to sigma F and blocks its ability to form an RNA polymerase holoenzyme (E-sigma F). Phosphorylates SpoIIAA on a serine residue. This phosphorylation may enable SpoIIAA to act as an anti-anti-sigma factor that counteracts SpoIIAB and thus releases sigma F from inhibition. The protein is Anti-sigma F factor of Priestia megaterium (Bacillus megaterium).